We begin with the raw amino-acid sequence, 117 residues long: B-box domain protein 30 (117 aa).

The B box-type; atypical zinc-finger motif lies at 27 to 73; it reads KAPVSCELCGENATVYCEADAAFLCRKCDRWVHSANFLARRHLRRVI. The Zn(2+) site is built by C32, C35, C54, and H59. The PFVFL signature appears at 113-117; it reads PFVFL.

Interacts with CO (via B-box) and with TPL (via PFVFL motif). As to expression, highly expressed in shoot apical meristems and in vascular tissues of leaves. Also detected in petioles.

Its subcellular location is the nucleus. Developmental regulator acting by forming heterodimeric complexes, that sequester CO and CO-like (COL) proteins into non-functional complexes. Engages CO and the transcriptional repressor TPL in a tripartite complex. Involved in the CO-mediated long-day flowering-promotion pathway. The polypeptide is B-box domain protein 30 (Arabidopsis thaliana (Mouse-ear cress)).